A 246-amino-acid polypeptide reads, in one-letter code: Mitochondrial inner membrane protease ATP23 homolog (246 aa).

His125 contacts a divalent metal cation. Residue Glu126 is part of the active site. A divalent metal cation is bound at residue His129.

The protein belongs to the peptidase M76 family. As to quaternary structure, interacts with XRCC6.

The chain is Mitochondrial inner membrane protease ATP23 homolog from Homo sapiens (Human).